The primary structure comprises 78 residues: UPF0235 protein AF_2072 (78 aa).

This sequence belongs to the UPF0235 family.

This chain is UPF0235 protein AF_2072, found in Archaeoglobus fulgidus (strain ATCC 49558 / DSM 4304 / JCM 9628 / NBRC 100126 / VC-16).